Consider the following 440-residue polypeptide: Guanine/hypoxanthine permease PbuG (440 aa).

A run of 13 helical transmembrane segments spans residues 18–38 (IIGGLTTFLSMAYILFVNPIT), 57–77 (AVFTATALASAAGCILMGLIA), 81–101 (IAIAPGMGLNAFFAFSVVLGM), 107–127 (AALSGVFISGLIFVALSLTGF), 142–162 (AVGAGIGLFITFVGLQGSGII), 175–195 (IHSGPVLLTIFGVIVTVILMV), 201–221 (GVFIGMLLTAVAGMIFGLVPV), 251–271 (MLIVILTFLFVGFFDTAGTLV), 291–311 (ALLADSSSIVIGAVLGTSTTT), 327–347 (GFAAIVTGILFLLATFFSPLL), 354–374 (VTAPALIIVGALMVAPLGKIA), 388–408 (MIMMPLTYSIATGIAIGFIFY), and 419–439 (KEVHPIMYGLFVVFILYFIFL).

This sequence belongs to the nucleobase:cation symporter-2 (NCS2) (TC 2.A.40) family. Azg-like subfamily.

Its subcellular location is the cell membrane. Its function is as follows. Involved in the uptake of the purine bases hypoxanthine and guanine. In Bacillus subtilis (strain 168), this protein is Guanine/hypoxanthine permease PbuG (pbuG).